Reading from the N-terminus, the 326-residue chain is Pyruvate dehydrogenase E1 component subunit alpha (326 aa).

As to quaternary structure, heterodimer of an alpha and a beta chain. Thiamine diphosphate serves as cofactor.

It catalyses the reaction N(6)-[(R)-lipoyl]-L-lysyl-[protein] + pyruvate + H(+) = N(6)-[(R)-S(8)-acetyldihydrolipoyl]-L-lysyl-[protein] + CO2. Its function is as follows. The pyruvate dehydrogenase complex catalyzes the overall conversion of pyruvate to acetyl-CoA and CO(2). It contains multiple copies of three enzymatic components: pyruvate dehydrogenase (E1), dihydrolipoamide acetyltransferase (E2) and lipoamide dehydrogenase (E3). The chain is Pyruvate dehydrogenase E1 component subunit alpha (pdhA) from Rickettsia bellii (strain RML369-C).